A 327-amino-acid chain; its full sequence is Phenylalanine--tRNA ligase alpha subunit (327 aa).

A Mg(2+)-binding site is contributed by E252.

It belongs to the class-II aminoacyl-tRNA synthetase family. Phe-tRNA synthetase alpha subunit type 1 subfamily. Tetramer of two alpha and two beta subunits. Mg(2+) serves as cofactor.

Its subcellular location is the cytoplasm. It carries out the reaction tRNA(Phe) + L-phenylalanine + ATP = L-phenylalanyl-tRNA(Phe) + AMP + diphosphate + H(+). This is Phenylalanine--tRNA ligase alpha subunit from Vibrio campbellii (strain ATCC BAA-1116).